The following is a 506-amino-acid chain: UDP-N-acetylglucosamine--peptide N-acetylglucosaminyltransferase GtfA subunit (506 aa).

Residues 1–78 form an N-terminus R-fold-1 region; it reads MTVYNINLGI…FTDIKIAPTT (78 aa). A UDP-binding site is contributed by 16-19; sequence GVEY. The extended beta-sheet domain stretch occupies residues 79 to 195; sequence VTLDQVLAQV…LYRFPDRIFY (117 aa). A C-terminus R-fold-1 region spans residues 196–306; the sequence is SKAELVRYFL…QPQIATIPVG (111 aa). His242 is an N-acetyl-D-glucosamine binding site. Positions 307 to 506 are R-fold-2; it reads SLDQLTYPKE…LKEVRDDSAL (200 aa). Residues Arg328, Tyr357, and 383 to 385 contribute to the UDP site; that span reads GHA. 405–407 contacts N-acetyl-D-glucosamine; the sequence is GFG. Thr409 provides a ligand contact to UDP.

The protein belongs to the glycosyltransferase group 1 family. Glycosyltransferase 4 subfamily. Forms a heterotetramer with 2 subunits each of GtfA and GtfB. Part of the accessory SecA2/SecY2 protein translocation apparatus required to export cell wall protein GspB.

Its subcellular location is the cytoplasm. The protein resides in the cell membrane. The catalysed reaction is L-seryl-[protein] + UDP-N-acetyl-alpha-D-glucosamine = 3-O-[N-acetyl-alpha-D-glucosaminyl]-L-seryl-[protein] + UDP + H(+). The protein operates within protein modification; protein glycosylation. Required for polymorphic O-glycosylation of GspB, a serine-rich repeat cell wall protein encoded upstream in the same operon. Catalyzes the first step in glycosylation by transferring N-acetylglucosamine from UDP-GlcNAc to serine residues in GspB. Part of the accessory SecA2/SecY2 system specifically required to export GspB. Upon coexpression in E.coli with GtfB glycosylates GspB constructs. Glycosylation probably occurs intracellularly. Requires GtfB for glycosylation activity, it has no activity alone. Does not use UDP-glucose as substrate. Has a fast, probably processive glycosylation phase followed by a slower, non-processive phase. The enzyme probably modifies its tertiary conformation by opening and closing its intersubunit interfaces to accomodate the increasingly glycosylated substrate; protein substrate recognition is provided by GtfB. The polypeptide is UDP-N-acetylglucosamine--peptide N-acetylglucosaminyltransferase GtfA subunit (Streptococcus gordonii).